Consider the following 158-residue polypeptide: Phosphopantetheine adenylyltransferase (158 aa).

T9 serves as a coordination point for substrate. Residues 9 to 10 (TF) and H17 each bind ATP. Positions 41, 73, and 87 each coordinate substrate. ATP is bound by residues 88 to 90 (GVR), E98, and 123 to 129 (WSYVSST).

The protein belongs to the bacterial CoaD family. Homohexamer. Requires Mg(2+) as cofactor.

It is found in the cytoplasm. The catalysed reaction is (R)-4'-phosphopantetheine + ATP + H(+) = 3'-dephospho-CoA + diphosphate. The protein operates within cofactor biosynthesis; coenzyme A biosynthesis; CoA from (R)-pantothenate: step 4/5. Reversibly transfers an adenylyl group from ATP to 4'-phosphopantetheine, yielding dephospho-CoA (dPCoA) and pyrophosphate. This chain is Phosphopantetheine adenylyltransferase, found in Pasteurella multocida (strain Pm70).